A 460-amino-acid chain; its full sequence is Ecdysteroid UDP-glucosyltransferase (460 aa).

A signal peptide spans 1-18 (MFISILLLALAVERILCA).

This sequence belongs to the UDP-glycosyltransferase family.

Its function is as follows. Catalyzes the transfer of glucose from UDP-glucose to ecdysteroids which are insect molting hormones. Expression of egt interferes with normal insect development and block molting. The chain is Ecdysteroid UDP-glucosyltransferase (EGT) from Lacanobia oleracea granulosis virus (LoGV).